A 295-amino-acid chain; its full sequence is Succinate dehydrogenase assembly factor 2, mitochondrial (295 aa).

Disordered stretches follow at residues Ala-35–Leu-90, Pro-208–Ala-227, and Thr-269–Ser-295. Polar residues predominate over residues Ser-45–Asn-75.

It belongs to the SDHAF2 family. In terms of assembly, interacts with the flavoprotein subunit within the SDH catalytic dimer.

Its subcellular location is the mitochondrion matrix. Plays an essential role in the assembly of succinate dehydrogenase (SDH), an enzyme complex (also referred to as respiratory complex II) that is a component of both the tricarboxylic acid (TCA) cycle and the mitochondrial electron transport chain, and which couples the oxidation of succinate to fumarate with the reduction of ubiquinone (coenzyme Q) to ubiquinol. Required for flavinylation (covalent attachment of FAD) of the flavoprotein subunit of the SDH catalytic dimer. The protein is Succinate dehydrogenase assembly factor 2, mitochondrial of Aspergillus terreus (strain NIH 2624 / FGSC A1156).